Consider the following 205-residue polypeptide: Purine catabolism protein PucB (205 aa).

It functions in the pathway purine metabolism; hypoxanthine degradation. Functionally, required for xanthine dehydrogenase activity. Could be involved in formation of the molybdenum cofactor required by xanthine dehydrogenase. The chain is Purine catabolism protein PucB (pucB) from Bacillus subtilis (strain 168).